The following is a 74-amino-acid chain: DNA-directed RNA polymerase subunit omega (74 aa).

Belongs to the RNA polymerase subunit omega family. The RNAP catalytic core consists of 2 alpha, 1 beta, 1 beta' and 1 omega subunit. When a sigma factor is associated with the core the holoenzyme is formed, which can initiate transcription.

It carries out the reaction RNA(n) + a ribonucleoside 5'-triphosphate = RNA(n+1) + diphosphate. Functionally, promotes RNA polymerase assembly. Latches the N- and C-terminal regions of the beta' subunit thereby facilitating its interaction with the beta and alpha subunits. This chain is DNA-directed RNA polymerase subunit omega, found in Helicobacter pylori (strain Shi470).